The primary structure comprises 566 residues: Proline--tRNA ligase 1 (566 aa).

The protein belongs to the class-II aminoacyl-tRNA synthetase family. ProS type 1 subfamily. As to quaternary structure, homodimer.

It is found in the cytoplasm. It catalyses the reaction tRNA(Pro) + L-proline + ATP = L-prolyl-tRNA(Pro) + AMP + diphosphate. Its function is as follows. Catalyzes the attachment of proline to tRNA(Pro) in a two-step reaction: proline is first activated by ATP to form Pro-AMP and then transferred to the acceptor end of tRNA(Pro). As ProRS can inadvertently accommodate and process non-cognate amino acids such as alanine and cysteine, to avoid such errors it has two additional distinct editing activities against alanine. One activity is designated as 'pretransfer' editing and involves the tRNA(Pro)-independent hydrolysis of activated Ala-AMP. The other activity is designated 'posttransfer' editing and involves deacylation of mischarged Ala-tRNA(Pro). The misacylated Cys-tRNA(Pro) is not edited by ProRS. This chain is Proline--tRNA ligase 1, found in Bacillus cereus (strain ZK / E33L).